Reading from the N-terminus, the 37-residue chain is MKVRPSVKKMCEKCRVIRRRGRVMVICSNPKHKQRQG.

Belongs to the bacterial ribosomal protein bL36 family.

The protein is Large ribosomal subunit protein bL36 of Gloeothece citriformis (strain PCC 7424) (Cyanothece sp. (strain PCC 7424)).